Reading from the N-terminus, the 194-residue chain is uncharacterized protein (194 aa).

This is an uncharacterized protein from Ostreid herpesvirus 1 (isolate France) (OsHV-1).